The chain runs to 786 residues: Keratin, type I cytoskeletal 9 (786 aa).

Positions 1 to 21 (MNCRQFLSSHCSRDSSGGGGG) are disordered. Positions 1–136 (MNCRQFLSSH…SGAGGILGAD (136 aa)) are head. Residue serine 52 is modified to Phosphoserine. The interval 137-172 (EKTTMQDLNSRLASYLDKVQALEDANKELESKIREW) is coil 1A. One can recognise an IF rod domain in the interval 137 to 449 (EKTTMQDLNS…SLLEGGQEDF (313 aa)). The tract at residues 173-191 (YDKQGSRTFHRDYSPYYDT) is linker 1. The coil 1B stretch occupies residues 192–283 (IEDLKNQIVN…KNHEDEMSQL (92 aa)). Positions 284-306 (TGQNSGDVNVEMNAAPGRDLTKI) are linker 12. A coil 2 region spans residues 307 to 445 (LNDMREEYER…KTYRSLLEGG (139 aa)). The segment at 446–760 (QEDFESHESG…GGGSGSKGGS (315 aa)) is tail. The segment at 447–786 (EDFESHESGQ…DDTQGYHIQY (340 aa)) is disordered. Gly residues-rich tracts occupy residues 460–657 (GSGG…GGSG) and 664–761 (SSSG…GGSG). Residues 762-773 (RSSQVQSSSSKS) show a composition bias toward low complexity.

This sequence belongs to the intermediate filament family. In terms of assembly, heterotetramer of two type I and two type II keratins.

May serve an important special function either in the mature palmar and plantar skin tissue or in the morphogenetic program of the formation of these tissues. Plays a role in keratin filament assembly. This chain is Keratin, type I cytoskeletal 9, found in Canis lupus familiaris (Dog).